We begin with the raw amino-acid sequence, 401 residues long: Cysteine desulfurase CsdA (401 aa).

At Lys222 the chain carries N6-(pyridoxal phosphate)lysine. The active-site Cysteine persulfide intermediate is Cys358.

Belongs to the class-V pyridoxal-phosphate-dependent aminotransferase family. Csd subfamily. In terms of assembly, homodimer. Forms a heterodimer with CsdE. Pyridoxal 5'-phosphate serves as cofactor.

The catalysed reaction is (sulfur carrier)-H + L-cysteine = (sulfur carrier)-SH + L-alanine. It catalyses the reaction L-selenocysteine + AH2 = hydrogenselenide + L-alanine + A + H(+). The enzyme catalyses 3-sulfino-L-alanine + H2O = sulfite + L-alanine + H(+). Cysteine desulfurase activity is increased 2-fold in the presence of CsdE. In terms of biological role, catalyzes the removal of elemental sulfur and selenium atoms from L-cysteine, L-cystine, L-selenocysteine, and L-selenocystine to produce L-alanine, and transiently retains the released sulfur atom on a cysteine residue, in the form of a persulfide. Can also desulfinate L-cysteine sulfinate (3-sulfino-L-alanine), which is the best substrate of the enzyme. Functions as a selenium delivery protein in the pathway for the biosynthesis of selenophosphate. Seems to participate in Fe/S biogenesis by recruiting the SufBCD-SufE proteins. Transfers sulfur to CsdE that increases the cysteine desulfurase activity of CsdA. Can also transfer sulfur directly to TcdA/CsdL in vitro. Appears to support the function of TcdA in the generation of cyclic threonylcarbamoyladenosine at position 37 (ct(6)A37) in tRNAs that read codons beginning with adenine. This is Cysteine desulfurase CsdA (csdA) from Escherichia coli (strain K12).